Consider the following 244-residue polypeptide: Proteasome subunit alpha type-5 (244 aa).

Belongs to the peptidase T1A family. The 26S proteasome consists of a 20S proteasome core and two 19S regulatory subunits. The 20S proteasome core is composed of 28 subunits that are arranged in four stacked rings, resulting in a barrel-shaped structure. The two end rings are each formed by seven alpha subunits, and the two central rings are each formed by seven beta subunits. The catalytic chamber with the active sites is on the inside of the barrel.

Its subcellular location is the cytoplasm. The protein localises to the nucleus. The proteasome is a multicatalytic proteinase complex which is characterized by its ability to cleave peptides with Arg, Phe, Tyr, Leu, and Glu adjacent to the leaving group at neutral or slightly basic pH. The proteasome has an ATP-dependent proteolytic activity. The chain is Proteasome subunit alpha type-5 (Prosalpha5) from Drosophila melanogaster (Fruit fly).